The following is a 241-amino-acid chain: Lactate utilization protein C (241 aa).

It belongs to the LutC/YkgG family.

Functionally, is involved in L-lactate degradation and allows cells to grow with lactate as the sole carbon source. The polypeptide is Lactate utilization protein C (Geobacillus sp. (strain WCH70)).